Here is a 453-residue protein sequence, read N- to C-terminus: Ribosomal protein uS12 methylthiotransferase RimO (453 aa).

The 116-residue stretch at 9–124 (PKVGFVSLGC…VMEAVHTHLP (116 aa)) folds into the MTTase N-terminal domain. 6 residues coordinate [4Fe-4S] cluster: Cys-18, Cys-54, Cys-83, Cys-155, Cys-159, and Cys-162. Residues 141 to 382 (LTPKHYAYLK…MEVAERVSAR (242 aa)) enclose the Radical SAM core domain. The TRAM domain maps to 385–453 (QRKVGKTLRV…ADGHDLWGEV (69 aa)).

The protein belongs to the methylthiotransferase family. RimO subfamily. [4Fe-4S] cluster serves as cofactor.

It is found in the cytoplasm. The enzyme catalyses L-aspartate(89)-[ribosomal protein uS12]-hydrogen + (sulfur carrier)-SH + AH2 + 2 S-adenosyl-L-methionine = 3-methylsulfanyl-L-aspartate(89)-[ribosomal protein uS12]-hydrogen + (sulfur carrier)-H + 5'-deoxyadenosine + L-methionine + A + S-adenosyl-L-homocysteine + 2 H(+). Its function is as follows. Catalyzes the methylthiolation of an aspartic acid residue of ribosomal protein uS12. The sequence is that of Ribosomal protein uS12 methylthiotransferase RimO from Ralstonia nicotianae (strain ATCC BAA-1114 / GMI1000) (Ralstonia solanacearum).